A 206-amino-acid chain; its full sequence is Endoplasmic reticulum transmembrane protein 1 (206 aa).

Over 1-7 the chain is Lumenal; that stretch reads MSLYFTT. Residues 8-28 form a helical membrane-spanning segment; the sequence is LFLLLTVEMVMLFIFVLPLPF. Residues 29 to 45 lie on the Cytoplasmic side of the membrane; that stretch reads RIRRGIFSTYNQLTAKQ. A helical membrane pass occupies residues 46 to 66; it reads QIKTIIFITGCLVGLLFIDSW. Over 67-104 the chain is Lumenal; it reads KRSQIRVSLYHNDNSGSIGSSAVTPIQALASRAYNQRN. Residues 105–125 traverse the membrane as a helical segment; the sequence is MYISGFILYFSICIPTVMSIV. Over 126-206 the chain is Cytoplasmic; it reads KRLVKYQGLI…AAAEASKKGN (81 aa). The interval 140-163 is disordered; the sequence is KQKLNKPSSNSKKDSNEADSTKLQ. Residues 150–163 show a composition bias toward basic and acidic residues; sequence SKKDSNEADSTKLQ. Lys-190 is covalently cross-linked (Glycyl lysine isopeptide (Lys-Gly) (interchain with G-Cter in ubiquitin)). Residues 203-206 carry the Di-lysine motif motif; the sequence is KKGN.

This sequence belongs to the BCAP29/BCAP31 family.

The protein localises to the endoplasmic reticulum membrane. May play a role in anterograde transport of membrane proteins from the endoplasmic reticulum to the Golgi. In Saccharomyces cerevisiae (strain ATCC 204508 / S288c) (Baker's yeast), this protein is Endoplasmic reticulum transmembrane protein 1 (YET1).